The primary structure comprises 114 residues: MEMVNKIACFVLLCMVVVAPHAEALTCGQVTSTLAPCLPYLMNRGPLGGCCGGVKGLLGQAQTTVDRQTACTCLKSAASSFTGLDLGKAASLPSTCSVNIPYKISPSTDCSKVQ.

Residues 1-23 (MEMVNKIACFVLLCMVVVAPHAE) form the signal peptide. Intrachain disulfides connect Cys-27-Cys-73, Cys-37-Cys-50, Cys-51-Cys-96, and Cys-71-Cys-110.

This sequence belongs to the plant LTP family.

In terms of biological role, plant non-specific lipid-transfer proteins transfer phospholipids as well as galactolipids across membranes. May play a role in wax or cutin deposition in the cell walls of expanding epidermal cells and certain secretory tissues. The chain is Non-specific lipid-transfer protein 2 (LTP2) from Solanum pennellii (Tomato).